The sequence spans 323 residues: Cyclin-H (323 aa).

Phosphoserine; by CDK8 is present on Ser5. Ser132 is modified (phosphoserine). Positions 296-323 (GYEDDDYVSKKPKQEEEEWTDDDLVDAL) are disordered. Ser304 is subject to Phosphoserine; by CDK8. Acidic residues predominate over residues 310–323 (EEEEWTDDDLVDAL). The residue at position 315 (Thr315) is a Phosphothreonine.

This sequence belongs to the cyclin family. Cyclin C subfamily. Associates primarily with CDK7 and MAT1 to form the CAK complex. CAK can further associate with the core-TFIIH to form the TFIIH basal transcription factor.

Its subcellular location is the nucleus. Regulates CDK7, the catalytic subunit of the CDK-activating kinase (CAK) enzymatic complex. CAK activates the cyclin-associated kinases CDK1, CDK2, CDK4 and CDK6 by threonine phosphorylation. CAK complexed to the core-TFIIH basal transcription factor activates RNA polymerase II by serine phosphorylation of the repetitive C-terminal domain (CTD) of its large subunit (POLR2A), allowing its escape from the promoter and elongation of the transcripts. Involved in cell cycle control and in RNA transcription by RNA polymerase II. Its expression and activity are constant throughout the cell cycle. The sequence is that of Cyclin-H (Ccnh) from Rattus norvegicus (Rat).